The following is a 328-amino-acid chain: Naphthalene 1,2-dioxygenase/salicylate 5-hydroxylase systems, ferredoxin--NAD(P)(+), reductase component (328 aa).

Residues 1–89 (MELVVEPLNL…DCTIEIPESD (89 aa)) enclose the 2Fe-2S ferredoxin-type domain. [2Fe-2S] cluster-binding residues include cysteine 35, cysteine 40, cysteine 43, and cysteine 73. Positions 96–193 (ARIVKGTVTA…SGPLGTAYLR (98 aa)) constitute an FAD-binding FR-type domain.

This sequence belongs to the bacterial ring-hydroxylating dioxygenase ferredoxin reductase family. In terms of assembly, ferredoxin reductase NagAa belongs to both the salicylate 5-hydroxylase (S5H) and the naphthalene 1,2-dioxygenase (NDO) multicomponent enzyme systems. The NDO multicomponent enzyme system is composed of an electron transfer component and a dioxygenase component (iron sulfur protein (ISP)). The electron transfer component is composed of a ferredoxin reductase (NagAa) and a ferredoxin (NagAb), and the dioxygenase component is formed by a large alpha subunit (NagAc) and a small beta subunit (NagAd). The S5H multicomponent enzyme system is composed of an electron transfer component and a monooxygenase component. The electron transfer component is comprised of a ferredoxin reductase (NagAa) and a ferredoxin (NagAb), and the monooxygenase component is formed by a large subunit (NagG) and a small subunit (NagH). Requires [2Fe-2S] cluster as cofactor. The cofactor is FAD.

It catalyses the reaction 2 reduced [2Fe-2S]-[ferredoxin] + NAD(+) + H(+) = 2 oxidized [2Fe-2S]-[ferredoxin] + NADH. The catalysed reaction is 2 reduced [2Fe-2S]-[ferredoxin] + NADP(+) + H(+) = 2 oxidized [2Fe-2S]-[ferredoxin] + NADPH. It functions in the pathway aromatic compound metabolism; naphthalene degradation. Its function is as follows. Component of two multicomponent enzyme systems which are involved in the catabolism of naphthalene. Plays a role as an electron transfer component for both salicylate 5-hydroxylase (S5H) and naphthalene 1,2-dioxygenase (NDO) systems, by transferring electrons from NAD(P)H to the oxygenase component via the ferredoxin NagAb. The electron transport chain from the two systems can use both NADH and NADPH as electron donors at approximately similar rates. The chain is Naphthalene 1,2-dioxygenase/salicylate 5-hydroxylase systems, ferredoxin--NAD(P)(+), reductase component from Ralstonia sp.